The chain runs to 488 residues: Transmembrane protein 39A-B (488 aa).

N-linked (GlcNAc...) asparagine glycans are attached at residues asparagine 31 and asparagine 39. Transmembrane regions (helical) follow at residues glycine 72–isoleucine 92, threonine 110–alanine 130, and leucine 155–valine 175. An N-linked (GlcNAc...) asparagine glycan is attached at asparagine 180. Residues serine 182–phenylalanine 202 traverse the membrane as a helical segment. N-linked (GlcNAc...) asparagine glycosylation occurs at asparagine 206. Transmembrane regions (helical) follow at residues glutamate 287–valine 307, cysteine 319–proline 339, leucine 420–leucine 440, and asparagine 446–leucine 466.

This sequence belongs to the TMEM39 family.

The protein localises to the membrane. This is Transmembrane protein 39A-B (tmem39a-b) from Xenopus laevis (African clawed frog).